The following is a 354-amino-acid chain: Fructose-1,6-bisphosphatase class 1 (354 aa).

Mg(2+)-binding residues include Glu-112, Asp-134, Leu-136, and Asp-137. Residues 137–140 (DGSS), Asn-229, Tyr-257, and Lys-287 contribute to the substrate site. Residue Glu-293 participates in Mg(2+) binding.

It belongs to the FBPase class 1 family. As to quaternary structure, homotetramer. Mg(2+) serves as cofactor.

It is found in the cytoplasm. The enzyme catalyses beta-D-fructose 1,6-bisphosphate + H2O = beta-D-fructose 6-phosphate + phosphate. It functions in the pathway carbohydrate biosynthesis; Calvin cycle. This Trichodesmium erythraeum (strain IMS101) protein is Fructose-1,6-bisphosphatase class 1.